A 100-amino-acid chain; its full sequence is UPF0473 protein Csac_1599 (100 aa).

This sequence belongs to the UPF0473 family.

This is UPF0473 protein Csac_1599 from Caldicellulosiruptor saccharolyticus (strain ATCC 43494 / DSM 8903 / Tp8T 6331).